The primary structure comprises 2725 residues: Teneurin-1 (2725 aa).

The interval Met1 to Glu48 is disordered. One can recognise a Teneurin N-terminal domain in the interval Met1–Cys318. The Cytoplasmic segment spans residues Met1 to Thr324. Residues Arg62–Lys65 carry the Nuclear localization signal (NLS) motif. Ser105 carries the phosphoserine modification. Thr109 is modified (phosphothreonine). Residue Ser116 is modified to Phosphoserine. Polar residues predominate over residues Ala174 to Thr189. The segment at Ala174–Ser241 is disordered. Over residues Pro192–His201 the composition is skewed to pro residues. The Required for interaction with SORBS1 (Ten-1 ICD form) signature appears at Pro290–Arg297. A helical transmembrane segment spans residues Ala325–Leu345. The Extracellular segment spans residues Thr346–Arg2725. Residue Asn433 is glycosylated (N-linked (GlcNAc...) asparagine). EGF-like domains are found at residues Ile528–Ala559, Arg560–Val591, Pro592–Glu624, Glu625–Thr657, Pro658–Ser691, Thr692–Cys721, Glu722–Thr753, and Val761–Asn796. Intrachain disulfides connect Cys532/Cys542, Cys536/Cys547, Cys549/Cys558, Cys567/Cys578, Cys580/Cys589, Cys596/Cys607, Cys601/Cys612, Cys614/Cys623, Cys628/Cys639, Cys633/Cys644, Cys646/Cys655, Cys666/Cys679, Cys681/Cys690, Cys695/Cys705, Cys699/Cys710, Cys712/Cys721, Cys726/Cys736, Cys730/Cys741, Cys743/Cys752, Cys765/Cys775, Cys769/Cys784, and Cys786/Cys795. Asn905 and Asn1084 each carry an N-linked (GlcNAc...) asparagine glycan. 5 NHL repeats span residues Leu1194–Ile1219, Ser1292–Ile1336, Leu1351–Arg1402, Phe1414–Asn1458, and Cys1481–Asn1524. The stretch at Tyr1534–His1553 is one YD 1 repeat. Residues Asn1550 and Asn1567 are each glycosylated (N-linked (GlcNAc...) asparagine). YD repeat units follow at residues Tyr1570–Arg1590, Tyr1608–Thr1632, Tyr1633–Glu1654, and Tyr1655–His1675. N-linked (GlcNAc...) asparagine glycans are attached at residues Asn1663, Asn1699, Asn1757, Asn1781, and Asn1842. 11 YD repeats span residues Tyr1845–Glu1864, Tyr1865–Thr1885, Tyr1886–Glu1904, Tyr1905–Gln1925, Tyr1933–Asp1949, Tyr1950–Leu1969, Tyr1970–Thr1989, Tyr1992–Thr2012, Tyr2015–Val2035, Tyr2085–Asn2105, and Tyr2113–Met2133. Asn2145 carries an N-linked (GlcNAc...) asparagine glycan. YD repeat units lie at residues Tyr2153–Ser2173, Tyr2174–Leu2194, Tyr2196–Gly2216, Tyr2228–Tyr2248, and Tyr2250–Phe2270. A glycan (N-linked (GlcNAc...) asparagine) is linked at Asn2285. 2 YD repeats span residues Tyr2296–Tyr2313 and Tyr2314–Ile2337. Residue Ser2580 is modified to Phosphoserine. N-linked (GlcNAc...) asparagine glycosylation occurs at Asn2602.

This sequence belongs to the tenascin family. Teneurin subfamily. As to quaternary structure, homodimer; disulfide-linked. Heterodimer with either TENM2 or TENM3. May also form heterodimer with TENM4. Ten-1 ICD interacts with SORBS1 (via third SH3 domain). Interacts with MBD1. Ten-1 ICD interacts with HINT1. In terms of processing, derives from the plasma membrane form by proteolytic processing. Further proteolytic cleavage may be generated. In terms of tissue distribution, expressed in fetal brain.

It localises to the cell membrane. The protein resides in the nucleus. It is found in the nucleus speckle. Its subcellular location is the nucleus matrix. The protein localises to the cytoplasm. It localises to the cytoskeleton. In terms of biological role, involved in neural development, regulating the establishment of proper connectivity within the nervous system. May function as a cellular signal transducer. Plays a role in the regulation of neuroplasticity in the limbic system. Mediates a rapid reorganization of actin- and tubulin-based cytoskeleton elements with an increase in dendritic arborization and spine density formation of neurons in the hippocampus and amygdala. Induces BDNF transcription inhibition in neurons. Activates the mitogen-activated protein (MAP) kinase 2 (MEK2) and extracellular signal-regulated kinase (ERK) cascade. Also acts as a bioactive neuroprotective peptide on limbic neurons of the brain and regulates stress-induced behavior: attenuates alkalosis-associated necrotic cell death and the effects of corticotropin-releasing factor (CRF) on c-fos/FOS induction and on the reinstatement of cocaine seeking. Functionally, induces gene transcription activation. In Homo sapiens (Human), this protein is Teneurin-1 (TENM1).